A 193-amino-acid polypeptide reads, in one-letter code: Ion-translocating oxidoreductase complex subunit A (193 aa).

The next 6 helical transmembrane spans lie at 5–25 (ILLIISTALINNFVLVKFLGL), 39–59 (IGMGMATTFVLTVASLSAYLV), 65–85 (IPLEAEFLRTLVFILVIAVIV), 102–122 (LLGIYLPLITTNCAVLGVALL), 134–154 (VLYGFGAAAGFSLVLVLFSAL), and 171–191 (SIALITAGLMSLAFMGFTGLV).

It belongs to the NqrDE/RnfAE family. The complex is composed of six subunits: RnfA, RnfB, RnfC, RnfD, RnfE and RnfG.

The protein localises to the cell inner membrane. Its function is as follows. Part of a membrane-bound complex that couples electron transfer with translocation of ions across the membrane. In Glaesserella parasuis serovar 5 (strain SH0165) (Haemophilus parasuis), this protein is Ion-translocating oxidoreductase complex subunit A.